The chain runs to 270 residues: Putative pyruvate, phosphate dikinase regulatory protein 2 (270 aa).

151–158 (GVSRTSKT) provides a ligand contact to ADP.

This sequence belongs to the pyruvate, phosphate/water dikinase regulatory protein family. PDRP subfamily.

It catalyses the reaction N(tele)-phospho-L-histidyl/L-threonyl-[pyruvate, phosphate dikinase] + ADP = N(tele)-phospho-L-histidyl/O-phospho-L-threonyl-[pyruvate, phosphate dikinase] + AMP + H(+). It carries out the reaction N(tele)-phospho-L-histidyl/O-phospho-L-threonyl-[pyruvate, phosphate dikinase] + phosphate + H(+) = N(tele)-phospho-L-histidyl/L-threonyl-[pyruvate, phosphate dikinase] + diphosphate. Bifunctional serine/threonine kinase and phosphorylase involved in the regulation of the pyruvate, phosphate dikinase (PPDK) by catalyzing its phosphorylation/dephosphorylation. This is Putative pyruvate, phosphate dikinase regulatory protein 2 from Listeria innocua serovar 6a (strain ATCC BAA-680 / CLIP 11262).